We begin with the raw amino-acid sequence, 415 residues long: uncharacterized protein (415 aa).

His-88 serves as a coordination point for Zn(2+). Asp-90 is a catalytic residue. Asp-121 contributes to the Zn(2+) binding site. Glu-155 (proton acceptor) is an active-site residue. The Zn(2+) site is built by Glu-156, Asp-185, and His-392.

Belongs to the peptidase M20A family. Zn(2+) is required as a cofactor. Requires Co(2+) as cofactor.

This is an uncharacterized protein from Methanococcus maripaludis (strain DSM 14266 / JCM 13030 / NBRC 101832 / S2 / LL).